The chain runs to 190 residues: Bifunctional protein PyrR (190 aa).

The short motif at 107 to 119 (IILVDDVLYSGRT) is the PRPP-binding element.

It belongs to the purine/pyrimidine phosphoribosyltransferase family. PyrR subfamily.

It carries out the reaction UMP + diphosphate = 5-phospho-alpha-D-ribose 1-diphosphate + uracil. Its function is as follows. Regulates the transcription of the pyrimidine nucleotide (pyr) operon in response to exogenous pyrimidines. In terms of biological role, also displays a weak uracil phosphoribosyltransferase activity which is not physiologically significant. The polypeptide is Bifunctional protein PyrR (Corynebacterium diphtheriae (strain ATCC 700971 / NCTC 13129 / Biotype gravis)).